A 364-amino-acid chain; its full sequence is DNA replication and repair protein RecF (364 aa).

An ATP-binding site is contributed by Gly-30–Thr-37.

This sequence belongs to the RecF family.

It is found in the cytoplasm. The RecF protein is involved in DNA metabolism; it is required for DNA replication and normal SOS inducibility. RecF binds preferentially to single-stranded, linear DNA. It also seems to bind ATP. The sequence is that of DNA replication and repair protein RecF from Pelotomaculum thermopropionicum (strain DSM 13744 / JCM 10971 / SI).